The chain runs to 610 residues: MLKCIKHEYGIKNMKSIRNFSIIAHIDHGKSTLSDRLIQLCGGLSEREMSNQVLDSMDLEKERGITIKAQSVMIDYKNKSGNIFNLNFIDTPGHVDFSYEVSRSLAACEGALLVVDSTQGVEAQTLANCYTAIDMNVEIVPVLNKIDLPNSNADKVAKEIEDIIGIPALDAIRCSAKTGEGIEDLIERIINDIPYPKGSINSPLQALIIDSWFDNYLGVVSLIRIKNGILFERDKIQVMSTGKNYYVDQIGVFTPKKLNKNQLRCGEVGWIICGIKNIIAAPVGDTLTTAKNPAKNMIIGFKKIKPQIYAGLFPLTSDQYEMFRDALGKLSLNDASLFYEPENSVALGFGFRCGFLGVLHMEIIQARLEREYSIDLITTIPTVIYEIELINGKIIYLDTPSNFPNMNDIKIIKEPIVECSILSPPQFLGSIIKLCIKKRGVQINMVYHSHQVLLKYNIPMNEVILNFFDELKSVSSGYASLEYDFKYFQSVKMVRIDILINSEKVDALTILSYHKNAQSRSREIVDKMKKLIPRHQFDISIQAVINNSVIARSTIKQLRKNVLSKCYGGDVSRKKKLLQKQKDGKKRMKKIGNVNVPKTVFLSILNSRES.

Positions 15 to 197 (KSIRNFSIIA…RIINDIPYPK (183 aa)) constitute a tr-type G domain. GTP-binding positions include 27–32 (DHGKST) and 144–147 (NKID).

The protein belongs to the TRAFAC class translation factor GTPase superfamily. Classic translation factor GTPase family. LepA subfamily.

It is found in the cell membrane. It catalyses the reaction GTP + H2O = GDP + phosphate + H(+). Required for accurate and efficient protein synthesis under certain stress conditions. May act as a fidelity factor of the translation reaction, by catalyzing a one-codon backward translocation of tRNAs on improperly translocated ribosomes. Back-translocation proceeds from a post-translocation (POST) complex to a pre-translocation (PRE) complex, thus giving elongation factor G a second chance to translocate the tRNAs correctly. Binds to ribosomes in a GTP-dependent manner. This Buchnera aphidicola subsp. Acyrthosiphon pisum (strain APS) (Acyrthosiphon pisum symbiotic bacterium) protein is Elongation factor 4.